The primary structure comprises 461 residues: Glycerol-3-phosphate acyltransferase, chloroplastic (461 aa).

The transit peptide at 1 to 96 (MSMTGSSAYY…SPPNMSASVS (96 aa)) directs the protein to the chloroplast. Low complexity predominate over residues 47 to 76 (LLSSTSSSSSSSISLRSSTAPSPSCSSVTP). The segment at 47-88 (LLSSTSSSSSSSISLRSSTAPSPSCSSVTPKDNCLASAKHSP) is disordered. The HXXXXD motif motif lies at 231–236 (HQTEAD).

Belongs to the GPAT/DAPAT family.

The protein resides in the plastid. It is found in the chloroplast stroma. It carries out the reaction sn-glycerol 3-phosphate + an acyl-CoA = a 1-acyl-sn-glycero-3-phosphate + CoA. Its pathway is phospholipid metabolism; CDP-diacylglycerol biosynthesis; CDP-diacylglycerol from sn-glycerol 3-phosphate: step 1/3. Functionally, esterifies acyl-group from acyl-ACP to the sn-1 position of glycerol-3-phosphate. The enzyme from chilling-resistant plants discriminates against non-fluid palmitic acid and selects oleic acid whereas the enzyme from sensitive plants accepts both fatty acids. This is Glycerol-3-phosphate acyltransferase, chloroplastic (PLSB) from Phaseolus vulgaris (Kidney bean).